Reading from the N-terminus, the 94-residue chain is Large ribosomal subunit protein bL27 (94 aa).

Residues 1-9 constitute a propeptide that is removed on maturation; sequence MNLANLQLF. Positions 11 to 34 are disordered; sequence HKKGGGSTSNGRDSQAKRLGAKAA.

It belongs to the bacterial ribosomal protein bL27 family. The N-terminus is cleaved by ribosomal processing cysteine protease Prp.

The polypeptide is Large ribosomal subunit protein bL27 (Streptococcus pyogenes serotype M3 (strain ATCC BAA-595 / MGAS315)).